The chain runs to 470 residues: Neuraminidase (470 aa).

The Intravirion portion of the chain corresponds to 1 to 14; sequence MNPNQKIITIGSIS. The interval 11-32 is involved in apical transport and lipid raft association; that stretch reads GSISLGLVVFNVLLHVVSIIVT. A helical transmembrane segment spans residues 15–35; it reads LGLVVFNVLLHVVSIIVTVLV. The tract at residues 32–86 is hypervariable stalk region; sequence TVLVLGKGGNNGICNETVVREYNETVRIEKVTQWHNTNVVEYVPYWNGGTYMNNT. At 36-470 the chain is on the virion surface side; it reads LGKGGNNGIC…AILPFDIDKM (435 aa). Asn46, Asn54, and Asn84 each carry an N-linked (GlcNAc...) asparagine; by host glycan. A head of neuraminidase region spans residues 89 to 470; the sequence is ICDAKGFAPF…AILPFDIDKM (382 aa). 8 disulfides stabilise this stretch: Cys90/Cys417, Cys122/Cys127, Cys182/Cys229, Cys231/Cys236, Cys277/Cys290, Cys279/Cys288, Cys316/Cys335, and Cys421/Cys446. Residue Arg116 coordinates substrate. Asn144 carries N-linked (GlcNAc...) asparagine; by host glycosylation. Catalysis depends on Asp149, which acts as the Proton donor/acceptor. Arg150 serves as a coordination point for substrate. Residue 275 to 276 participates in substrate binding; the sequence is EE. A substrate-binding site is contributed by Arg291. Residues Asp292, Gly296, and Asp322 each coordinate Ca(2+). Residue Arg368 coordinates substrate. Asn398 carries an N-linked (GlcNAc...) asparagine; by host glycan. Tyr402 serves as the catalytic Nucleophile.

Belongs to the glycosyl hydrolase 34 family. In terms of assembly, homotetramer. It depends on Ca(2+) as a cofactor. Post-translationally, N-glycosylated.

It is found in the virion membrane. The protein resides in the host apical cell membrane. It catalyses the reaction Hydrolysis of alpha-(2-&gt;3)-, alpha-(2-&gt;6)-, alpha-(2-&gt;8)- glycosidic linkages of terminal sialic acid residues in oligosaccharides, glycoproteins, glycolipids, colominic acid and synthetic substrates.. Its activity is regulated as follows. Inhibited by the neuraminidase inhibitors zanamivir (Relenza) and oseltamivir (Tamiflu). These drugs interfere with the release of progeny virus from infected cells and are effective against all influenza strains. Resistance to neuraminidase inhibitors is quite rare. Its function is as follows. Catalyzes the removal of terminal sialic acid residues from viral and cellular glycoconjugates. Cleaves off the terminal sialic acids on the glycosylated HA during virus budding to facilitate virus release. Additionally helps virus spread through the circulation by further removing sialic acids from the cell surface. These cleavages prevent self-aggregation and ensure the efficient spread of the progeny virus from cell to cell. Otherwise, infection would be limited to one round of replication. Described as a receptor-destroying enzyme because it cleaves a terminal sialic acid from the cellular receptors. May facilitate viral invasion of the upper airways by cleaving the sialic acid moieties on the mucin of the airway epithelial cells. Likely to plays a role in the budding process through its association with lipid rafts during intracellular transport. May additionally display a raft-association independent effect on budding. Plays a role in the determination of host range restriction on replication and virulence. Sialidase activity in late endosome/lysosome traffic seems to enhance virus replication. This chain is Neuraminidase, found in Influenza A virus (strain A/Duck/Ukraine/1/1963 H3N8).